A 919-amino-acid polypeptide reads, in one-letter code: Sarcosine dehydrogenase, mitochondrial (919 aa).

The N-terminal 22 residues, 1–22 (MASLSRVLRVAATCPRGRAAWN), are a transit peptide targeting the mitochondrion. Lys38 carries the N6-succinyllysine modification. His109 carries the tele-8alpha-FAD histidine modification. Position 174 is an N6-acetyllysine; alternate (Lys174). N6-succinyllysine; alternate is present on Lys174. 4 positions are modified to N6-succinyllysine: Lys278, Lys378, Lys392, and Lys535. An N6-acetyllysine mark is found at Lys560 and Lys776. Tyr778 is subject to Phosphotyrosine. Residues Lys803, Lys885, and Lys905 each carry the N6-acetyllysine; alternate modification. 3 positions are modified to N6-succinyllysine; alternate: Lys803, Lys885, and Lys905.

It belongs to the GcvT family. FAD is required as a cofactor.

Its subcellular location is the mitochondrion matrix. It carries out the reaction (6S)-5,6,7,8-tetrahydrofolyl-(gamma-L-Glu)(n) + sarcosine + oxidized [electron-transfer flavoprotein] + H(+) = (6R)-5,10-methylenetetrahydrofolyl-(gamma-L-Glu)(n) + reduced [electron-transfer flavoprotein] + glycine. The protein operates within amine and polyamine degradation; sarcosine degradation; formaldehyde and glycine from sarcosine: step 1/1. Functionally, catalyzes the last step of the oxidative degradation of choline to glycine. Converts sarcosine into glycine. This Mus musculus (Mouse) protein is Sarcosine dehydrogenase, mitochondrial.